Reading from the N-terminus, the 434-residue chain is Enolase (434 aa).

Glutamine 163 contacts (2R)-2-phosphoglycerate. Residue glutamate 205 is the Proton donor of the active site. Mg(2+) contacts are provided by aspartate 242, glutamate 289, and aspartate 316. Residues lysine 341, arginine 370, serine 371, and lysine 392 each contribute to the (2R)-2-phosphoglycerate site. Lysine 341 functions as the Proton acceptor in the catalytic mechanism.

The protein belongs to the enolase family. It depends on Mg(2+) as a cofactor.

It is found in the cytoplasm. The protein resides in the secreted. Its subcellular location is the cell surface. It catalyses the reaction (2R)-2-phosphoglycerate = phosphoenolpyruvate + H2O. The protein operates within carbohydrate degradation; glycolysis; pyruvate from D-glyceraldehyde 3-phosphate: step 4/5. Its function is as follows. Catalyzes the reversible conversion of 2-phosphoglycerate (2-PG) into phosphoenolpyruvate (PEP). It is essential for the degradation of carbohydrates via glycolysis. The sequence is that of Enolase from Lacticaseibacillus paracasei (strain ATCC 334 / BCRC 17002 / CCUG 31169 / CIP 107868 / KCTC 3260 / NRRL B-441) (Lactobacillus paracasei).